Reading from the N-terminus, the 470-residue chain is Uronate isomerase (470 aa).

The protein belongs to the metallo-dependent hydrolases superfamily. Uronate isomerase family.

The enzyme catalyses D-glucuronate = D-fructuronate. The catalysed reaction is aldehydo-D-galacturonate = keto-D-tagaturonate. It participates in carbohydrate metabolism; pentose and glucuronate interconversion. This is Uronate isomerase from Sphingopyxis alaskensis (strain DSM 13593 / LMG 18877 / RB2256) (Sphingomonas alaskensis).